The following is a 619-amino-acid chain: UvrABC system protein C (619 aa).

Residues 20 to 98 form the GIY-YIG domain; it reads TAPGVYRMYA…IKSLSPRYNV (79 aa). Residues 207–242 form the UVR domain; sequence DQLGEEIMHSMQQASEALEFERAARLRDLLSSLRSM.

Belongs to the UvrC family. In terms of assembly, interacts with UvrB in an incision complex.

Its subcellular location is the cytoplasm. Functionally, the UvrABC repair system catalyzes the recognition and processing of DNA lesions. UvrC both incises the 5' and 3' sides of the lesion. The N-terminal half is responsible for the 3' incision and the C-terminal half is responsible for the 5' incision. This is UvrABC system protein C from Xanthomonas axonopodis pv. citri (strain 306).